The primary structure comprises 178 residues: Female-specific protein transformer (178 aa).

Composition is skewed to basic and acidic residues over residues 1-18 and 25-40; these read MKMD…DSHG and RERE…DSKK. The segment at 1 to 117 is disordered; sequence MKMDADSSCG…RRYNPPPKII (117 aa). 2 stretches are compositionally biased toward basic residues: residues 59–73 and 81–108; these read RRLR…RRSA and RRHR…RSPR.

It localises to the nucleus speckle. Member of the regulatory pathway controlling female somatic sexual differentiation, regulated by Sxl. Activates dsx female-specific splicing by promoting the formation of a splicing enhancer complex which consists of tra, tra2 and sr proteins. This chain is Female-specific protein transformer (tra), found in Drosophila erecta (Fruit fly).